We begin with the raw amino-acid sequence, 210 residues long: MNFVAFERAKQGTGASRRLRNSGKTPGIVYGGSAEPQLIEVDHNALWHALKKEAFHSSVLDMELAGKTSKVLLRDVQYHPYKQLVLHIDFQRVDEKTKLHMKVPLHFTGAEESPAVKIDKCMVNPVATELDVSCMPSDLPEFINVDLSKLEKGRSLHLKDIKLPRGVSPVVRGGQQNPVLVSVVPPVAEVEAPAEGAAAPAPAPAKKGKK.

Residues 191-200 (EAPAEGAAAP) are compositionally biased toward low complexity. The tract at residues 191-210 (EAPAEGAAAPAPAPAKKGKK) is disordered.

This sequence belongs to the bacterial ribosomal protein bL25 family. CTC subfamily. In terms of assembly, part of the 50S ribosomal subunit; part of the 5S rRNA/L5/L18/L25 subcomplex. Contacts the 5S rRNA. Binds to the 5S rRNA independently of L5 and L18.

In terms of biological role, this is one of the proteins that binds to the 5S RNA in the ribosome where it forms part of the central protuberance. The chain is Large ribosomal subunit protein bL25 from Paracidovorax citrulli (strain AAC00-1) (Acidovorax citrulli).